The primary structure comprises 226 residues: Probable amino-acid ABC transporter permease protein YckA (226 aa).

The ABC transmembrane type-1 domain maps to 27-215; that stretch reads IGYTLLISFV…AICSIAAVFQ (189 aa). 5 consecutive transmembrane segments (helical) span residues 31 to 51, 73 to 93, 94 to 114, 160 to 180, and 194 to 214; these read LLIS…ISLA, VPIL…GIEF, SAVT…IAEI, VLLD…PELL, and MTMY…AAVF.

Belongs to the binding-protein-dependent transport system permease family. HisMQ subfamily.

It localises to the cell membrane. In terms of biological role, part of a binding-protein-dependent transport system. Probably responsible for the translocation of the substrate across the membrane. This Bacillus subtilis (strain 168) protein is Probable amino-acid ABC transporter permease protein YckA (yckA).